Reading from the N-terminus, the 232-residue chain is UPF0758 protein EF_2926 (232 aa).

The region spanning 107–229 is the MPN domain; it reads KVTSSQQVAQ…YISLREENFF (123 aa). Residues His-178, His-180, and Asp-191 each coordinate Zn(2+). The JAMM motif motif lies at 178 to 191; the sequence is HNHPSGNPTPSPQD.

It belongs to the UPF0758 family.

The polypeptide is UPF0758 protein EF_2926 (Enterococcus faecalis (strain ATCC 700802 / V583)).